The following is an 897-amino-acid chain: Autophagy-related protein 9 (897 aa).

Topologically, residues 1–256 (MEQSEDTIQH…DVYSYYLGNG (256 aa)) are cytoplasmic. Disordered regions lie at residues 46–106 (RSGS…QELE), 112–131 (TIAK…QADS), and 195–224 (ENQL…RPSP). Residues 80 to 93 (ENMTSYNGAQGSGS) show a composition bias toward polar residues. Residues 214-224 (ARLSSPSRPSP) show a composition bias toward low complexity. The chain crosses the membrane as a helical span at residues 257-277 (FYCIMIEKILNLLTLLFIVFI). The Lumenal portion of the chain corresponds to 278-314 (STYMSHCIDYSKLPNGHKFSDVRVDQCYETQITGTTK). A helical transmembrane segment spans residues 315–335 (LLFWIFGVFVVLKVVQMYFDF). The Cytoplasmic portion of the chain corresponds to 336 to 431 (RRIHEIHNFY…PLYRTSTLTK (96 aa)). The stretch at 432–452 (TLEWNIHLCIIGFAFNEAGFL) is an intramembrane region. Residues 453–472 (KQSFLNPAQREFLSEELKKR) lie on the Cytoplasmic side of the membrane. A helical transmembrane segment spans residues 473–493 (FILAGFLNIILAPFLVVYFVL). Topologically, residues 494–558 (LYFFRYFNEY…NQFPNALGDY (65 aa)) are lumenal. The chain crosses the membrane as a helical span at residues 559–579 (FFKFVKFISGSFVAILALMTV). Topologically, residues 580 to 661 (LDPENFLNFE…QEFCKLYNLR (82 aa)) are cytoplasmic. The stretch at 662 to 682 (VILLLRELASLIMTPFILWFS) is an intramembrane region. Residues 683 to 897 (LPNSAESIVD…QYYRKSDVGR (215 aa)) are Cytoplasmic-facing.

Belongs to the ATG9 family. As to quaternary structure, homotrimer; forms a homotrimer with a central pore that forms a path between the two membrane leaflets. Post-translationally, phosphorylated by ATG1. ATG1 phosphorylation is required for preautophagosome elongation.

The protein localises to the preautophagosomal structure membrane. Its subcellular location is the cytoplasmic vesicle membrane. It is found in the golgi apparatus membrane. The protein resides in the endoplasmic reticulum membrane. The catalysed reaction is a 1,2-diacyl-sn-glycero-3-phosphocholine(in) = a 1,2-diacyl-sn-glycero-3-phosphocholine(out). It catalyses the reaction a 1,2-diacyl-sn-glycero-3-phospho-L-serine(in) = a 1,2-diacyl-sn-glycero-3-phospho-L-serine(out). The enzyme catalyses a 1,2-diacyl-sn-glycero-3-phosphoethanolamine(in) = a 1,2-diacyl-sn-glycero-3-phosphoethanolamine(out). It carries out the reaction a 1,2-diacyl-sn-glycero-3-phospho-(1D-myo-inositol-3-phosphate)(in) = a 1,2-diacyl-sn-glycero-3-phospho-(1D-myo-inositol-3-phosphate)(out). Functionally, phospholipid scramblase involved in autophagy and cytoplasm to vacuole transport (Cvt) vesicle formation. Cycles between the preautophagosomal structure/phagophore assembly site (PAS) and the cytoplasmic vesicle pool and supplies membrane for the growing autophagosome. Lipid scramblase activity plays a key role in preautophagosomal structure/phagophore assembly by distributing the phospholipids that arrive through ATG2 from the cytoplasmic to the luminal leaflet of the bilayer, thereby driving autophagosomal membrane expansion. Required for mitophagy. Also involved in endoplasmic reticulum-specific autophagic process and is essential for the survival of cells subjected to severe ER stress. Different machineries are required for anterograde trafficking to the PAS during either the Cvt pathway or bulk autophagy and for retrograde trafficking. The sequence is that of Autophagy-related protein 9 (ATG9) from Eremothecium gossypii (strain ATCC 10895 / CBS 109.51 / FGSC 9923 / NRRL Y-1056) (Yeast).